Here is a 70-residue protein sequence, read N- to C-terminus: uncharacterized protein (70 aa).

A helical membrane pass occupies residues 12-32 (VLFMNFFSVFVCTIGTLFLVF).

It localises to the membrane. This is an uncharacterized protein from Saccharomyces cerevisiae (strain ATCC 204508 / S288c) (Baker's yeast).